The following is a 542-amino-acid chain: Chaperonin GroEL 1 (542 aa).

Residues 30-33 (TLGP), K51, 87-91 (DGTTT), G415, 480-482 (NAA), and D496 contribute to the ATP site.

Belongs to the chaperonin (HSP60) family. As to quaternary structure, forms a cylinder of 14 subunits composed of two heptameric rings stacked back-to-back. Interacts with the co-chaperonin GroES.

The protein localises to the cytoplasm. The catalysed reaction is ATP + H2O + a folded polypeptide = ADP + phosphate + an unfolded polypeptide.. Its function is as follows. Together with its co-chaperonin GroES, plays an essential role in assisting protein folding. The GroEL-GroES system forms a nano-cage that allows encapsulation of the non-native substrate proteins and provides a physical environment optimized to promote and accelerate protein folding. This chain is Chaperonin GroEL 1, found in Nitrobacter winogradskyi (strain ATCC 25391 / DSM 10237 / CIP 104748 / NCIMB 11846 / Nb-255).